Reading from the N-terminus, the 498-residue chain is ATP synthase subunit beta, chloroplastic (498 aa).

ATP is bound at residue 172 to 179; sequence GGAGVGKT.

Belongs to the ATPase alpha/beta chains family. F-type ATPases have 2 components, CF(1) - the catalytic core - and CF(0) - the membrane proton channel. CF(1) has five subunits: alpha(3), beta(3), gamma(1), delta(1), epsilon(1). CF(0) has four main subunits: a(1), b(1), b'(1) and c(9-12).

It localises to the plastid. The protein localises to the chloroplast thylakoid membrane. The catalysed reaction is ATP + H2O + 4 H(+)(in) = ADP + phosphate + 5 H(+)(out). Produces ATP from ADP in the presence of a proton gradient across the membrane. The catalytic sites are hosted primarily by the beta subunits. The chain is ATP synthase subunit beta, chloroplastic from Canella winterana (Wild cinnamon).